Consider the following 411-residue polypeptide: Exodeoxyribonuclease 7 large subunit (411 aa).

It belongs to the XseA family. As to quaternary structure, heterooligomer composed of large and small subunits.

It is found in the cytoplasm. The enzyme catalyses Exonucleolytic cleavage in either 5'- to 3'- or 3'- to 5'-direction to yield nucleoside 5'-phosphates.. Its function is as follows. Bidirectionally degrades single-stranded DNA into large acid-insoluble oligonucleotides, which are then degraded further into small acid-soluble oligonucleotides. The polypeptide is Exodeoxyribonuclease 7 large subunit (Mycobacterium sp. (strain JLS)).